Consider the following 213-residue polypeptide: MISFLRGTVAHVGLSTAVIDLNGAGMSVYATPQTLSRLHVGEEGKVFTSLIVREDSMTLFGFADDDEREVFEVLLSVSGVGPRLALAVLAVHDPEAIRVAAHTGDNKTFTKVPGIGPKVAGRIVLELAGKLVPHGTAPAAATTAAEASWKPQVVAAMTSLGWSEKDASASIDKALADEPEVSFRGNVPEILRTTLRWLGQDGARAGNRVGSRG.

The segment at 1–63 (MISFLRGTVA…EDSMTLFGFA (63 aa)) is domain I. Residues 64 to 140 (DDDEREVFEV…LVPHGTAPAA (77 aa)) form a domain II region. A flexible linker region spans residues 140–144 (AATTA). The tract at residues 145-213 (AEASWKPQVV…RAGNRVGSRG (69 aa)) is domain III.

This sequence belongs to the RuvA family. As to quaternary structure, homotetramer. Forms an RuvA(8)-RuvB(12)-Holliday junction (HJ) complex. HJ DNA is sandwiched between 2 RuvA tetramers; dsDNA enters through RuvA and exits via RuvB. An RuvB hexamer assembles on each DNA strand where it exits the tetramer. Each RuvB hexamer is contacted by two RuvA subunits (via domain III) on 2 adjacent RuvB subunits; this complex drives branch migration. In the full resolvosome a probable DNA-RuvA(4)-RuvB(12)-RuvC(2) complex forms which resolves the HJ.

The protein localises to the cytoplasm. In terms of biological role, the RuvA-RuvB-RuvC complex processes Holliday junction (HJ) DNA during genetic recombination and DNA repair, while the RuvA-RuvB complex plays an important role in the rescue of blocked DNA replication forks via replication fork reversal (RFR). RuvA specifically binds to HJ cruciform DNA, conferring on it an open structure. The RuvB hexamer acts as an ATP-dependent pump, pulling dsDNA into and through the RuvAB complex. HJ branch migration allows RuvC to scan DNA until it finds its consensus sequence, where it cleaves and resolves the cruciform DNA. This Pseudarthrobacter chlorophenolicus (strain ATCC 700700 / DSM 12829 / CIP 107037 / JCM 12360 / KCTC 9906 / NCIMB 13794 / A6) (Arthrobacter chlorophenolicus) protein is Holliday junction branch migration complex subunit RuvA.